An 826-amino-acid polypeptide reads, in one-letter code: U-box domain-containing protein 4 (826 aa).

Residues 172 to 204 (RSNQEILIEAVALERQKEMAEQSENNAEVEFLD) are a coiled coil. In terms of domain architecture, U-box spans 229 to 303 (AILADFFCPL…ANWCETNDVK (75 aa)). Residues 330–501 (GADVSARKVS…TRRDLSDFSP (172 aa)) are disordered. The segment covering 347–360 (ASSSETGKPSFSSR) has biased composition (polar residues). Over residues 391–414 (DARRGSLNDFEDRSNDSRELRTDA) the composition is skewed to basic and acidic residues. A Phosphoserine modification is found at Ser-396. The span at 416–428 (GRSSVSSTTRGSV) shows a compositional bias: low complexity. Residues 492-501 (TRRDLSDFSP) are compositionally biased toward basic and acidic residues. ARM repeat units follow at residues 530–570 (NETR…LLAK), 573–612 (MDNR…NLSI), 614–653 (DNNK…SLSV), 655–694 (EENK…NLSI), 696–734 (QENK…NLAT), 736–775 (PEGR…QLST), and 778–817 (GRFC…YFRN).

The catalysed reaction is S-ubiquitinyl-[E2 ubiquitin-conjugating enzyme]-L-cysteine + [acceptor protein]-L-lysine = [E2 ubiquitin-conjugating enzyme]-L-cysteine + N(6)-ubiquitinyl-[acceptor protein]-L-lysine.. It participates in protein modification; protein ubiquitination. Its function is as follows. Functions as an E3 ubiquitin ligase. The protein is U-box domain-containing protein 4 (PUB4) of Arabidopsis thaliana (Mouse-ear cress).